Consider the following 749-residue polypeptide: Subtilisin-like protease SBT4.14 (749 aa).

Positions 1–28 (MIRSKCSCHHHLLVLVMVVLWISPRYAS) are cleaved as a signal peptide. A propeptide spans 29-115 (AEDEHAKDFY…VSRNQYRKLH (87 aa)) (activation peptide). In terms of domain architecture, Inhibitor I9 spans 38-115 (YIIYLGDRPD…VSRNQYRKLH (78 aa)). The Peptidase S8 domain occupies 119–595 (SWDFVGLPLT…GGQINPRRAA (477 aa)). Residue Asp145 is the Charge relay system of the active site. Asn176 carries N-linked (GlcNAc...) asparagine glycosylation. The active-site Charge relay system is the His210. N-linked (GlcNAc...) asparagine glycosylation is found at Asn225, Asn233, Asn446, and Asn458. Residue Ser536 is the Charge relay system of the active site. Asn618 is a glycosylation site (N-linked (GlcNAc...) asparagine).

Belongs to the peptidase S8 family. Post-translationally, the C-terminal propeptide is autocleaved. Expressed only in roots, particularly in xylem.

The protein is Subtilisin-like protease SBT4.14 of Arabidopsis thaliana (Mouse-ear cress).